A 140-amino-acid chain; its full sequence is Protein PsiE homolog (140 aa).

4 helical membrane-spanning segments follow: residues 16-36 (IVLQ…LSVF), 57-77 (YHLI…VMII), 85-105 (HFPL…LIII), and 110-130 (PLDL…LFIA).

It belongs to the PsiE family.

It is found in the cell membrane. In Bacillus cereus (strain ATCC 14579 / DSM 31 / CCUG 7414 / JCM 2152 / NBRC 15305 / NCIMB 9373 / NCTC 2599 / NRRL B-3711), this protein is Protein PsiE homolog.